Reading from the N-terminus, the 482-residue chain is UDP-N-acetylmuramate--L-alanine ligase (482 aa).

122–128 (GTHGKTT) is a binding site for ATP.

It belongs to the MurCDEF family.

The protein localises to the cytoplasm. It catalyses the reaction UDP-N-acetyl-alpha-D-muramate + L-alanine + ATP = UDP-N-acetyl-alpha-D-muramoyl-L-alanine + ADP + phosphate + H(+). Its pathway is cell wall biogenesis; peptidoglycan biosynthesis. In terms of biological role, cell wall formation. This is UDP-N-acetylmuramate--L-alanine ligase from Mycolicibacterium smegmatis (strain ATCC 700084 / mc(2)155) (Mycobacterium smegmatis).